A 647-amino-acid chain; its full sequence is Acetyl-coenzyme A synthetase (647 aa).

CoA contacts are provided by residues 190–193, threonine 308, and asparagine 332; that span reads RGGR. ATP-binding positions include 384–386, 408–413, aspartate 497, and arginine 512; these read GEP and DTWWQT. CoA is bound at residue serine 520. An ATP-binding site is contributed by arginine 523. Mg(2+)-binding residues include valine 534, histidine 536, and valine 539. Arginine 581 is a CoA binding site. Lysine 606 is subject to N6-acetyllysine.

It belongs to the ATP-dependent AMP-binding enzyme family. Mg(2+) is required as a cofactor. Acetylated. Deacetylation by the SIR2-homolog deacetylase activates the enzyme.

It carries out the reaction acetate + ATP + CoA = acetyl-CoA + AMP + diphosphate. Functionally, catalyzes the conversion of acetate into acetyl-CoA (AcCoA), an essential intermediate at the junction of anabolic and catabolic pathways. AcsA undergoes a two-step reaction. In the first half reaction, AcsA combines acetate with ATP to form acetyl-adenylate (AcAMP) intermediate. In the second half reaction, it can then transfer the acetyl group from AcAMP to the sulfhydryl group of CoA, forming the product AcCoA. The sequence is that of Acetyl-coenzyme A synthetase from Parvibaculum lavamentivorans (strain DS-1 / DSM 13023 / NCIMB 13966).